The chain runs to 807 residues: MRFLGIAAVATFSTVVSAYPKSTALYNCVSSVFGPSAPQRIVTPNDTTYLDSRLGETIQFDELPVLLAYAQESKEIAPLIRCAKTAGIKAVPRAGGHSFEAYSALNGTLIIDIAHLNYVNVSDDRQTAVVGAGIRLGALYTALSEHGTSFIGGICPTVGLAGFLGSGGFNMQQRSQGLAVEHVLAAKVVLADGRTVVASPDTNPDLFFAIRGGGGGTYGIVVEFTLSLTSIPRSAMLMLSWNDTASRFPAAKQYLDWAPKQIPEFMSQINVYRDKVQVLGWYYGGTEDELRSLVNASGLLDIGKPAVVIAGGCNTDNARAFGYTTMECLPDGKVDVSILNVVPDPFSKVGNSTQFKWNEVPKSTSMPVADPWQRFHRMSKSFFVLKDNPLTDQTLQSLLDRIASLDAKSQVWGEWHAWNISTPSKGSGNAFAWREKAYAHLEFQIHGAPDDKERQSTYENWLEDLESYLRPTVGGASYSGYLDADISTDPLTSYYGGNVCKLVSVKRKTENDYSSSTVEQLFIDSDVNARKITSRYPIPPPDKSIKTEDITLQDCWVRIYTPPSATSSGSVAVFIHGGGWIMGSPDIEDATCRRICRCSGMTVVSVGYRLAPKFQFPTGLNDCVRATLWTLGHFPVSALVIMGGSAGANLAFGVALKLVDAGLGEKVKGVLALVPATVHPDAVPADKRDQYTAMHENANNTVNTLAAMDCFLDAYAAPPHDKYFSVLLHPRLKDLKKVYLVECGTDTLRDDARLMRDALEEAGVPLMYDAYPGYPHYFWSYPSPVLAEASESFHENMLQALAWLDQE.

Residues 1–18 form the signal peptide; it reads MRFLGIAAVATFSTVVSA. 8 N-linked (GlcNAc...) asparagine glycosylation sites follow: Asn-45, Asn-106, Asn-120, Asn-242, Asn-295, Asn-351, Asn-419, and Asn-699. Positions 60-231 constitute an FAD-binding PCMH-type domain; it reads FDELPVLLAY…VEFTLSLTSI (172 aa).

It belongs to the oxygen-dependent FAD-linked oxidoreductase family. FAD serves as cofactor.

The protein operates within secondary metabolite biosynthesis. Its function is as follows. FAD-linked oxidoreductase; part of the gene cluster that mediates the biosynthesis of pyranterreones, a family of antioxidative compounds. The first step of pyranonigrins biosynthesis is performed by the hybrid PKS-NRPS synthetase pytA that condenses 4 malonyl-CoA units ato the acetyl starter unit by the modular PKS of pytA. The acyl chain is then connected to an L-serine through the amide bond by the modular NRPS of pytA. A tetramic acid is formed and released from the PKS-NRPS pytA to give pyranterreone 5 with the help of the thioesterase pytI. Pyranterreone 5 could be methylated by pytC to afford pyranterreone 6. Both pyranterreones 5 and 6 are subsequently oxidized by the FAD-linked oxidoreductase pytB and the cytochrome P450 monooxygenase pytD to form the fused gamma-pyrone core, resulting in pyranterreones 7 and 11, respectively. The hydroxy group at C-8 of pyranterreones 7 and 11 are dehydrated by the aspartyl protease pytH to form a delta-7 double bond to give pyranterreones 3 and 1, 2 accordingly. The exo-methylene of pyranterreone 3 could be reduced into a pendant methyl by reductase pytE to provide pyranterreone 4, also known as cordylactam. Pyranterreone 4 can be reconverted to pyranterreone 3 through pytB-catalyzed dehydrogenation or further oxidized to pyranterreones 9 and 10. In Aspergillus terreus (strain NIH 2624 / FGSC A1156), this protein is FAD-linked oxidoreductase pytB.